We begin with the raw amino-acid sequence, 24 residues long: U1-plectoxin-Pt1e (24 aa).

Residues Cys-4 and Cys-18 are joined by a disulfide bond.

It belongs to the neurotoxin 02 (plectoxin) family. 02 (plectoxin) subfamily. In terms of processing, contains 5 disulfide bonds. As to expression, expressed by the venom gland.

The protein resides in the secreted. Potent toxin that may paralyze and/or kill insect pests such as H.virescens (lepidoptera), S.exigua (beet armyworm) and M.sexta (tobacco hornworm). This chain is U1-plectoxin-Pt1e, found in Plectreurys tristis (Spider).